The sequence spans 227 residues: PKHD-type hydroxylase BTH_II1201 (227 aa).

Positions 78–178 (KVFPPLFNRY…RVASFFWIQS (101 aa)) constitute a Fe2OG dioxygenase domain. Fe cation contacts are provided by His-96, Asp-98, and His-159. Arg-169 contributes to the 2-oxoglutarate binding site.

Requires Fe(2+) as cofactor. L-ascorbate is required as a cofactor.

The sequence is that of PKHD-type hydroxylase BTH_II1201 from Burkholderia thailandensis (strain ATCC 700388 / DSM 13276 / CCUG 48851 / CIP 106301 / E264).